The following is a 123-amino-acid chain: Large ribosomal subunit protein uL14c (123 aa).

This sequence belongs to the universal ribosomal protein uL14 family. As to quaternary structure, part of the 50S ribosomal subunit.

It is found in the plastid. It localises to the chloroplast. Binds to 23S rRNA. The polypeptide is Large ribosomal subunit protein uL14c (Oryza nivara (Indian wild rice)).